The following is a 514-amino-acid chain: Sugar transport protein 4 (514 aa).

The Cytoplasmic segment spans residues 1–22 (MAGGFVSQTPGVRNYNYKLTPK). 12 helical membrane-spanning segments follow: residues 23 to 43 (VFVTCFIGAFGGLIFGYDLGI), 80 to 100 (LLTLFTSSLYVAALVSSLFAS), 117 to 137 (FTFFIGSAFNGFAQNIAMLLI), 140 to 160 (ILLGFGVGFANQSVPVYLSEM), 172 to 192 (GFQVAIIFGIVVATIINYFTA), 202 to 222 (ISLGLACVPAVMIMIGALILP), 283 to 303 (LIMTCFIPFFQQLTGINVITF), 321 to 341 (LSAMVTGIIELLCTFVSVFTV), 348 to 368 (ILFLQGGIQMLVSQIAIGAMI), 387 to 407 (LIVALICIYVAGFAWSWGPLG), 426 to 446 (INVSVNMFFTFLVAQLFLTML), and 451 to 471 (FGLFFFFAFFVVIMTIFIYLM). At 472–514 (LPETKNVPIEEMNRVWKAHWFWGKFIPDEAVNMGAAEMQQKSV) the chain is on the cytoplasmic side.

It belongs to the major facilitator superfamily. Sugar transporter (TC 2.A.1.1) family. Mostly in flowers and roots, especially in anthers, including pollen, and root tips. Also present in some hydathodes.

The protein localises to the cell membrane. Mediates an active uptake of hexoses, probably by sugar/hydrogen symport. Can transport glucose, methylglucose, galactose, xylose and mannose, but not fructose. This Arabidopsis thaliana (Mouse-ear cress) protein is Sugar transport protein 4 (STP4).